The primary structure comprises 288 residues: Formamidopyrimidine-DNA glycosylase (288 aa).

Proline 2 acts as the Schiff-base intermediate with DNA in catalysis. Catalysis depends on glutamate 3, which acts as the Proton donor. Lysine 59 functions as the Proton donor; for beta-elimination activity in the catalytic mechanism. Residues histidine 93, arginine 112, and lysine 168 each coordinate DNA. An FPG-type zinc finger spans residues 254–288 (NVYGRGGEPCKRCGAPIKRVVVGGRSTHYCATCQR). Residue arginine 278 is the Proton donor; for delta-elimination activity of the active site.

Belongs to the FPG family. In terms of assembly, monomer. It depends on Zn(2+) as a cofactor.

The enzyme catalyses Hydrolysis of DNA containing ring-opened 7-methylguanine residues, releasing 2,6-diamino-4-hydroxy-5-(N-methyl)formamidopyrimidine.. It carries out the reaction 2'-deoxyribonucleotide-(2'-deoxyribose 5'-phosphate)-2'-deoxyribonucleotide-DNA = a 3'-end 2'-deoxyribonucleotide-(2,3-dehydro-2,3-deoxyribose 5'-phosphate)-DNA + a 5'-end 5'-phospho-2'-deoxyribonucleoside-DNA + H(+). In terms of biological role, involved in base excision repair of DNA damaged by oxidation or by mutagenic agents. Acts as a DNA glycosylase that recognizes and removes damaged bases. Has a preference for oxidized purines, such as 7,8-dihydro-8-oxoguanine (8-oxoG). Has AP (apurinic/apyrimidinic) lyase activity and introduces nicks in the DNA strand. Cleaves the DNA backbone by beta-delta elimination to generate a single-strand break at the site of the removed base with both 3'- and 5'-phosphates. In Corynebacterium jeikeium (strain K411), this protein is Formamidopyrimidine-DNA glycosylase.